A 430-amino-acid polypeptide reads, in one-letter code: UDP-N-acetylmuramoylalanine--D-glutamate ligase (430 aa).

ATP is bound at residue 109–115 (GTDGKST).

Belongs to the MurCDEF family.

Its subcellular location is the cytoplasm. The catalysed reaction is UDP-N-acetyl-alpha-D-muramoyl-L-alanine + D-glutamate + ATP = UDP-N-acetyl-alpha-D-muramoyl-L-alanyl-D-glutamate + ADP + phosphate + H(+). It participates in cell wall biogenesis; peptidoglycan biosynthesis. Functionally, cell wall formation. Catalyzes the addition of glutamate to the nucleotide precursor UDP-N-acetylmuramoyl-L-alanine (UMA). The chain is UDP-N-acetylmuramoylalanine--D-glutamate ligase from Thermotoga petrophila (strain ATCC BAA-488 / DSM 13995 / JCM 10881 / RKU-1).